The sequence spans 296 residues: MYTRLLQSTTRLHPRAWDFIQLMRLDKPIGIYLLLWPTLWALWVAAEGVPSAKNLFIFVFGVILMRAAGCVINDYADRNFDGHVSRTRARPLASGKIQPREALVLFAVLVTASFVLVLFTNATTIWLSFGGLALAACYPFMKRYTFYPQVVLGAAFSWGMPMAFTAETGSLPPEAWLLYIANLLWTVAYDTYYAMADREDDLKIGVKSTAILFGDADRLIIASLQGLALLCLLLAGARFELGVWFHAGLLVAAACFVWEYHKTRNRKPMACFNAFLHNHWAGLAIFVGIVLDYALR.

The next 9 helical transmembrane spans lie at 29–49 (IGIYLLLWPTLWALWVAAEGV), 55–75 (LFIFVFGVILMRAAGCVINDY), 102–122 (ALVLFAVLVTASFVLVLFTNA), 124–141 (TIWLSFGGLALAACYPFM), 146–166 (FYPQVVLGAAFSWGMPMAFTA), 169–189 (GSLPPEAWLLYIANLLWTVAY), 216–236 (ADRLIIASLQGLALLCLLLAG), 239–259 (FELGVWFHAGLLVAAACFVWE), and 271–291 (CFNAFLHNHWAGLAIFVGIVL).

It belongs to the UbiA prenyltransferase family. It depends on Mg(2+) as a cofactor.

Its subcellular location is the cell inner membrane. The enzyme catalyses all-trans-octaprenyl diphosphate + 4-hydroxybenzoate = 4-hydroxy-3-(all-trans-octaprenyl)benzoate + diphosphate. Its pathway is cofactor biosynthesis; ubiquinone biosynthesis. Functionally, catalyzes the prenylation of para-hydroxybenzoate (PHB) with an all-trans polyprenyl group. Mediates the second step in the final reaction sequence of ubiquinone-8 (UQ-8) biosynthesis, which is the condensation of the polyisoprenoid side chain with PHB, generating the first membrane-bound Q intermediate 3-octaprenyl-4-hydroxybenzoate. In Ectopseudomonas mendocina (strain ymp) (Pseudomonas mendocina), this protein is 4-hydroxybenzoate octaprenyltransferase.